Consider the following 146-residue polypeptide: Snaclec alboaggregin-B subunit beta (146 aa).

An N-terminal signal peptide occupies residues 1-23 (MGRFIFGSFGLLVLFLSLSGTGA). Residues 24-143 (DCPSDWSSYD…CSRTYPFVCK (120 aa)) form the C-type lectin domain. Disulfide bonds link cysteine 25–cysteine 36, cysteine 53–cysteine 142, and cysteine 119–cysteine 134.

This sequence belongs to the snaclec family. In terms of assembly, heterodimer of subunits alpha and beta; disulfide-linked. Expressed by the venom gland.

It localises to the secreted. In terms of biological role, weakly agglutinates platelets at high doses by binding to GPIbalpha (GP1BA). This is Snaclec alboaggregin-B subunit beta from Trimeresurus albolabris (White-lipped pit viper).